Reading from the N-terminus, the 414-residue chain is 3-oxo-tetronate kinase (414 aa).

ATP contacts are provided by residues S255, 355-358 (GGET), and G398.

It belongs to the four-carbon acid sugar kinase family.

It catalyses the reaction 3-dehydro-L-erythronate + ATP = 3-dehydro-4-O-phospho-L-erythronate + ADP + H(+). It carries out the reaction 3-dehydro-D-erythronate + ATP = 3-dehydro-4-O-phospho-D-erythronate + ADP + H(+). Functionally, catalyzes the ATP-dependent phosphorylation of 3-oxo-tetronate to 3-oxo-tetronate 4-phosphate. In Actinobacillus succinogenes (strain ATCC 55618 / DSM 22257 / CCUG 43843 / 130Z), this protein is 3-oxo-tetronate kinase.